Consider the following 130-residue polypeptide: Small ribosomal subunit protein uS9 (130 aa).

The interval 111-130 is disordered; the sequence is VERKKVGLHKARRATQFSKR. A compositionally biased stretch (basic residues) spans 116–130; that stretch reads VGLHKARRATQFSKR.

This sequence belongs to the universal ribosomal protein uS9 family.

This chain is Small ribosomal subunit protein uS9, found in Xylella fastidiosa (strain M23).